The sequence spans 496 residues: Tripartite motif-containing protein 30A (496 aa).

The RING-type zinc finger occupies 15-59 (CPICLELLKEPVSADCNHSFCRACITLNYESNRNTDGKGNCPVCR). The segment at 91-132 (QKVNICAQHGEKLRLFCRKDMMVICWLCERSQEHRGHQTALI) adopts a B box-type zinc-finger fold. Residues Cys-96, His-99, Cys-118, and His-124 each contribute to the Zn(2+) site. Residues 173-239 (NQIQINVENV…RDLISDVEHH (67 aa)) adopt a coiled-coil conformation. The tract at residues 205-210 (KKEKKE) is highly hydrophilic. The Nuclear localization signal motif lies at 268–276 (TVPQKRKRT). Positions 281–496 (DLKGMLQVYQ…EPMTICGPPS (216 aa)) constitute a B30.2/SPRY domain.

As to quaternary structure, homomultimer. Interacts with NR2C2/TAK1, TAB2 and TAB3. Does not interact with NLRP3, NLRC4 or TAB1. Highly expressed in spleen and lymph nodes (at protein level).

It is found in the cytoplasm. It localises to the nucleus. Trans-acting factor that regulates gene expression of interleukin 2 receptor alpha chain. May affect IL2R-alpha expression through cis-acting negative regulatory elements or through competition with proteins that bind to enhancer or activator sequences. Negatively regulates Toll-like receptor (TLR)-mediated activation of NFKB by promoting degradation of TAB2 and TAB3 and preventing TRAF6 autoubiquitination. Negatively regulates production of reactive oxygen species (ROS) which inhibits activation of the NLRP3 inflammasome complex. This, in turn, regulates activation of CASP1 and subsequent cleavage of IL1B and IL18. No activity detected against a range of retroviruses including a number of lentiviruses, gammaretroviruses and betaretroviruses. This chain is Tripartite motif-containing protein 30A (Trim30a), found in Mus musculus (Mouse).